Here is a 281-residue protein sequence, read N- to C-terminus: tRNA uridine(34) hydroxylase (281 aa).

The 98-residue stretch at 125-222 folds into the Rhodanese domain; it reads AREDVKTIDT…YFLKTKNKDG (98 aa). Cys182 acts as the Cysteine persulfide intermediate in catalysis.

Belongs to the TrhO family.

The catalysed reaction is uridine(34) in tRNA + AH2 + O2 = 5-hydroxyuridine(34) in tRNA + A + H2O. Catalyzes oxygen-dependent 5-hydroxyuridine (ho5U) modification at position 34 in tRNAs. The sequence is that of tRNA uridine(34) hydroxylase from Neorickettsia sennetsu (strain ATCC VR-367 / Miyayama) (Ehrlichia sennetsu).